Reading from the N-terminus, the 190-residue chain is Potassium-transporting ATPase KdpC subunit (190 aa).

A helical membrane pass occupies residues 10 to 30 (TFIFLLLITGGVYPLLTTALG).

The protein belongs to the KdpC family. As to quaternary structure, the system is composed of three essential subunits: KdpA, KdpB and KdpC.

The protein resides in the cell inner membrane. Functionally, part of the high-affinity ATP-driven potassium transport (or Kdp) system, which catalyzes the hydrolysis of ATP coupled with the electrogenic transport of potassium into the cytoplasm. This subunit acts as a catalytic chaperone that increases the ATP-binding affinity of the ATP-hydrolyzing subunit KdpB by the formation of a transient KdpB/KdpC/ATP ternary complex. This chain is Potassium-transporting ATPase KdpC subunit, found in Escherichia coli O9:H4 (strain HS).